Consider the following 61-residue polypeptide: Putative antitoxin APE_0472b.1 (61 aa).

The protein belongs to the UPF0165 family.

Functionally, possibly the antitoxin component of a type II toxin-antitoxin (TA) system. The protein is Putative antitoxin APE_0472b.1 of Aeropyrum pernix (strain ATCC 700893 / DSM 11879 / JCM 9820 / NBRC 100138 / K1).